The chain runs to 879 residues: Paramyosin, long form (879 aa).

The nonhelical region stretch occupies residues 1-31 (MSSSQAVRSSKYSYRATSTGPGTADVNIEYI). Ser18 carries the post-translational modification Phosphoserine. Positions 32 to 858 (QDLSSLSRLE…IIRAKHRTFV (827 aa)) form a coiled coil. A nonhelical region region spans residues 859-879 (TTSTVPGSQVYIQETTRTITE).

This sequence belongs to the paramyosin family. As to quaternary structure, heterodimer of two isoforms. The more-acidic and less-abundant isoform is phosphorylated. In terms of tissue distribution, expressed in all larval and adult muscle tissues. Expression is five times higher in tubular than in fibrillar muscles.

It localises to the cytoplasm. The protein localises to the myofibril. In terms of biological role, paramyosin is a major structural component of many thick filaments isolated from invertebrate muscles. This is Paramyosin, long form (Prm) from Drosophila melanogaster (Fruit fly).